The primary structure comprises 88 residues: Large ribosomal subunit protein bL31B (88 aa).

Belongs to the bacterial ribosomal protein bL31 family. Type B subfamily. As to quaternary structure, part of the 50S ribosomal subunit.

The polypeptide is Large ribosomal subunit protein bL31B (Corynebacterium glutamicum (strain R)).